A 278-amino-acid polypeptide reads, in one-letter code: Bis(5'-nucleosyl)-tetraphosphatase, symmetrical (278 aa).

This sequence belongs to the Ap4A hydrolase family.

The enzyme catalyses P(1),P(4)-bis(5'-adenosyl) tetraphosphate + H2O = 2 ADP + 2 H(+). Hydrolyzes diadenosine 5',5'''-P1,P4-tetraphosphate to yield ADP. The protein is Bis(5'-nucleosyl)-tetraphosphatase, symmetrical of Buchnera aphidicola subsp. Baizongia pistaciae (strain Bp).